Here is a 410-residue protein sequence, read N- to C-terminus: Cytochrome P450(MEG) (410 aa).

Cysteine 355 is a heme binding site.

It belongs to the cytochrome P450 family. It depends on heme as a cofactor.

The protein resides in the cytoplasm. The enzyme catalyses reduced 2[4Fe-4S]-[ferredoxin] + progesterone + O2 + 2 H(+) = 15beta-hydroxyprogesterone + oxidized 2[4Fe-4S]-[ferredoxin] + H2O. In terms of biological role, has the capacity to hydroxylate certain steroids in the 15-beta position. Also hydroxylates progesterone in the 11-alpha and 9-beta position. This Priestia megaterium (Bacillus megaterium) protein is Cytochrome P450(MEG) (cyp106A2).